A 215-amino-acid chain; its full sequence is Cytochrome b6 (215 aa).

At 1 to 31 (MANVYDWFQERLEIQALADDVTSKYVPPHVN) the chain is on the cytoplasmic side. A helical transmembrane segment spans residues 32 to 52 (IFYCLGGITLTCFLIQFATGF). C35 is a heme c binding site. At 53–89 (AMTFYYKPTVTEAYASVQYIMNEVSFGWLIRSIHRWS) the chain is on the lumenal, thylakoid side. The heme b site is built by R83, H86, H100, and R103. Residues 90 to 110 (ASMMVLMMILHVFRVYLTGGF) traverse the membrane as a helical segment. The Cytoplasmic segment spans residues 111 to 115 (KKPRE). A helical transmembrane segment spans residues 116 to 136 (LTWISGVILAVITVSFGVTGY). Residues 137–185 (SLPWDQVGYWAVKIVSGVPEAIPVVGVLISDLLRGGSSVGQATLTRYYS) are Lumenal, thylakoid-facing. A helical transmembrane segment spans residues 186 to 206 (AHTFVLPWLIAVFMLLHFLMI). Heme b is bound by residues H187 and H202. At 207-215 (RKQGISGPL) the chain is on the cytoplasmic side. Position 208 (K208) interacts with heme c.

Belongs to the cytochrome b family. PetB subfamily. As to quaternary structure, the 4 large subunits of the cytochrome b6-f complex are cytochrome b6, subunit IV (17 kDa polypeptide, PetD), cytochrome f and the Rieske protein, while the 4 small subunits are PetG, PetL, PetM and PetN. The complex functions as a dimer. Heme b serves as cofactor. The cofactor is heme c.

It is found in the cellular thylakoid membrane. Its function is as follows. Component of the cytochrome b6-f complex, which mediates electron transfer between photosystem II (PSII) and photosystem I (PSI), cyclic electron flow around PSI, and state transitions. The protein is Cytochrome b6 of Mastigocladus laminosus (Fischerella sp.).